The sequence spans 244 residues: 1-(5-phosphoribosyl)-5-[(5-phosphoribosylamino)methylideneamino] imidazole-4-carboxamide isomerase (244 aa).

Residue Asp-10 is the Proton acceptor of the active site. The active-site Proton donor is Asp-129.

It belongs to the HisA/HisF family.

Its subcellular location is the cytoplasm. The enzyme catalyses 1-(5-phospho-beta-D-ribosyl)-5-[(5-phospho-beta-D-ribosylamino)methylideneamino]imidazole-4-carboxamide = 5-[(5-phospho-1-deoxy-D-ribulos-1-ylimino)methylamino]-1-(5-phospho-beta-D-ribosyl)imidazole-4-carboxamide. The protein operates within amino-acid biosynthesis; L-histidine biosynthesis; L-histidine from 5-phospho-alpha-D-ribose 1-diphosphate: step 4/9. This chain is 1-(5-phosphoribosyl)-5-[(5-phosphoribosylamino)methylideneamino] imidazole-4-carboxamide isomerase, found in Rhodococcus opacus (strain B4).